We begin with the raw amino-acid sequence, 380 residues long: Cytochrome b (380 aa).

A run of 4 helical transmembrane segments spans residues 33–53, 77–98, 113–133, and 178–198; these read FGSLLGLCLITQTLTGLFLAM, WLLRNIHANGASFFFICIYLHI, WNIGVLLLLLVMMTAFVGYVL, and FFTFHFLLPFIIMGTTMLHLL. The heme b site is built by H83 and H97. Heme b-binding residues include H182 and H196. An a ubiquinone-binding site is contributed by H201. Transmembrane regions (helical) follow at residues 226–246, 288–308, 320–340, and 347–367; these read YKDLLGFTILLATLSALALLN, LGGVLALLFSILILVVVPTLH, SSQTLFWILVANMLVLTWIGG, and FIIIGQVASVLYFMLFLFFIP.

The protein belongs to the cytochrome b family. As to quaternary structure, the cytochrome bc1 complex contains 3 respiratory subunits (MT-CYB, CYC1 and UQCRFS1), 2 core proteins (UQCRC1 and UQCRC2) and probably 6 low-molecular weight proteins. Requires heme b as cofactor.

It is found in the mitochondrion inner membrane. Component of the ubiquinol-cytochrome c reductase complex (complex III or cytochrome b-c1 complex) that is part of the mitochondrial respiratory chain. The b-c1 complex mediates electron transfer from ubiquinol to cytochrome c. Contributes to the generation of a proton gradient across the mitochondrial membrane that is then used for ATP synthesis. The chain is Cytochrome b (mt-cyb) from Lepisosteus oculatus (Spotted gar).